The primary structure comprises 118 residues: Putative pterin-4-alpha-carbinolamine dehydratase (118 aa).

It belongs to the pterin-4-alpha-carbinolamine dehydratase family.

The enzyme catalyses (4aS,6R)-4a-hydroxy-L-erythro-5,6,7,8-tetrahydrobiopterin = (6R)-L-erythro-6,7-dihydrobiopterin + H2O. The sequence is that of Putative pterin-4-alpha-carbinolamine dehydratase from Pseudomonas putida (strain GB-1).